A 777-amino-acid polypeptide reads, in one-letter code: DnaJ homolog subfamily C member 16 (777 aa).

The N-terminal stretch at 1-23 is a signal peptide; it reads MELGRAGPAGLLLLLLLLLAAQA. Topologically, residues 24 to 531 are cytoplasmic; the sequence is APERDPYRVL…DSLFHSNWRE (508 aa). The region spanning 28-92 is the J domain; sequence DPYRVLGVGR…EKRANFDRYG (65 aa). Residues 117 to 243 form the Thioredoxin domain; it reads FDESFFHFPF…LRQFVENLLP (127 aa). Residues 532-552 form a helical; Anchor for type IV membrane protein membrane-spanning segment; sequence MMPLLSLLFSALFILFGTVIV. Residues 553 to 777 are Extracellular-facing; it reads QAFSDSSDTR…FYIPSWPALD (225 aa). Residues 558 to 589 are disordered; that stretch reads SSDTRDSPASEKKDTTAKTEKNDTSFNKESNS. The span at 559-580 shows a compositional bias: basic and acidic residues; the sequence is SDTRDSPASEKKDTTAKTEKND. Residue Asn627 is glycosylated (N-linked (GlcNAc...) asparagine).

Its subcellular location is the endoplasmic reticulum membrane. Its function is as follows. Plays an important role in regulating the size of autophagosomes during the formation process. The chain is DnaJ homolog subfamily C member 16 (DNAJC16) from Gallus gallus (Chicken).